The primary structure comprises 71 residues: MPIIKVRDNEPFDVALRRFKRSCEKAGILSEIRRREFYEKPTTERKRAKASAIKRLTKKLSRENLKRIRLY.

It belongs to the bacterial ribosomal protein bS21 family.

This chain is Small ribosomal subunit protein bS21, found in Buchnera aphidicola subsp. Baizongia pistaciae (strain Bp).